The chain runs to 124 residues: Acidic phospholipase A2 BA1 (124 aa).

Intrachain disulfides connect Cys-26-Cys-116, Cys-28-Cys-44, Cys-43-Cys-95, Cys-49-Cys-124, Cys-50-Cys-88, Cys-57-Cys-81, and Cys-75-Cys-86. Ca(2+) contacts are provided by Tyr-27, Gly-29, and Gly-31. His-47 is an active-site residue. Residue Asp-48 coordinates Ca(2+). Asp-89 is a catalytic residue.

The protein belongs to the phospholipase A2 family. Group II subfamily. D49 sub-subfamily. It depends on Ca(2+) as a cofactor. As to expression, expressed by the venom gland.

The protein localises to the secreted. The catalysed reaction is a 1,2-diacyl-sn-glycero-3-phosphocholine + H2O = a 1-acyl-sn-glycero-3-phosphocholine + a fatty acid + H(+). In terms of biological role, PLA2 catalyzes the calcium-dependent hydrolysis of the 2-acyl groups in 3-sn-phosphoglycerides. This chain is Acidic phospholipase A2 BA1, found in Gloydius halys (Chinese water mocassin).